A 156-amino-acid polypeptide reads, in one-letter code: Small ribosomal subunit protein uS7 (156 aa).

This sequence belongs to the universal ribosomal protein uS7 family. In terms of assembly, part of the 30S ribosomal subunit. Contacts proteins S9 and S11.

In terms of biological role, one of the primary rRNA binding proteins, it binds directly to 16S rRNA where it nucleates assembly of the head domain of the 30S subunit. Is located at the subunit interface close to the decoding center, probably blocks exit of the E-site tRNA. This Sinorhizobium medicae (strain WSM419) (Ensifer medicae) protein is Small ribosomal subunit protein uS7.